The chain runs to 75 residues: Putative membrane protein insertion efficiency factor (75 aa).

Belongs to the UPF0161 family.

The protein resides in the cell inner membrane. Its function is as follows. Could be involved in insertion of integral membrane proteins into the membrane. This Leptospira biflexa serovar Patoc (strain Patoc 1 / ATCC 23582 / Paris) protein is Putative membrane protein insertion efficiency factor.